The chain runs to 321 residues: Glucokinase (321 aa).

8–13 is an ATP binding site; sequence GDVGGT.

Belongs to the bacterial glucokinase family.

It localises to the cytoplasm. The catalysed reaction is D-glucose + ATP = D-glucose 6-phosphate + ADP + H(+). This Enterobacter sp. (strain 638) protein is Glucokinase.